The primary structure comprises 246 residues: Probable septum site-determining protein MinC (246 aa).

This sequence belongs to the MinC family. Interacts with MinD and FtsZ.

Functionally, cell division inhibitor that blocks the formation of polar Z ring septums. Rapidly oscillates between the poles of the cell to destabilize FtsZ filaments that have formed before they mature into polar Z rings. Prevents FtsZ polymerization. This is Probable septum site-determining protein MinC from Lachnospira eligens (strain ATCC 27750 / DSM 3376 / VPI C15-48 / C15-B4) (Eubacterium eligens).